Consider the following 1157-residue polypeptide: MMKNNVDRIVSIVTALIMIFGASLFSPPIRVFADDTNINLVSNGDFESGTIDGWIKQGNPTLAVTTEQAIGQYSMKVTGRTQTYEGPAYSFLGKMQKGESYSVSLKVRLVSGQNSSNPLITVTMFREDDNGKHYDTIVWQKQVSEDSWTTVSGTYTLDYIGTLKTLYMYVESPDPTLEYYIDDVVVTTQNPIQVGNVIANETFENGNTSGWIGTGSSVVKAVYGVAHSGDYSLLTTGRTANWNGPSYDLTGKIVPGQQYNVDFWVKFVNGNDTEQIKATVKATSDKDNYIQVNDFANVNKGEWTEIKGSFTLPVADYSGISIYVESQNPTLEFYIDDFSVIGEISNNQITIQNDIPDLYSVFKDYFPIGVAVDPSRLNDADPHAQLTAKHFNMLVAENAMKPESLQPTEGNFTFDNADKIVDYAIAHNMKMRGHTLLWHNQVPDWFFQDPSDPSKSASRDLLLQRLKTHITTVLDHFKTKYGSQNPIIGWDVVNEVLDDNGNLRNSKWLQIIGPDYIEKAFEYAHEADPSMKLFINDYNIENNGVKTQAMYDLVKKLKSEGVPIDGIGMQMHININSNIDNIKASIEKLASLGVEIQVTELDMNMNGNISNEALLKQARLYKQLFDLFKAEKQYITAVVFWGVSDDVTWLSKPNAPLLFDSKLQAKPAFWAVVDPSKAIPDIQSAKALEGSPTIGANVDSSWKLVKPLYVNTYVEGTVGATATVKSMWDTKNLYLLVQVSDNTPSNNDGIEIFVDKNDDKSTSYETDDERYTIKRDGTGSSDITKYVTSNADGYVAQLAIPIEDISPAVNDKIGFDIRINDDKGNGKIDAITVWNDYTNSQNTNTSYFGDIVLSKSAQIATAIYGTPVIDGKVDDIWNNVEPISTNTWILGSNGATATQKMMWDDKYLYVLADVTDSNLNKSSINPYEQDSVEVFVDQNNDKTTYYENDDGQYRVNYDNEQSFGGSTNSNGFKSATSLTQSGYIVEEAIPWTSITPSNGTIIGFDLQVNNADENGKRTGIVTWCDPSGNSWQDTSGFGNLLLTGKPSGALKKGVTFDDIKNSWAKDAIEVLASRHIVEGMTDTQYEPNKTVTRAEFTAMILRLLNIKEEQYSGEFSDVNSGDWYANAIEAAYKAGIIEGDGKNARPNDSITREEMTQ.

A signal peptide spans 1 to 33 (MMKNNVDRIVSIVTALIMIFGASLFSPPIRVFA). CBM-cenC domains lie at 38 to 189 (INLV…VTTQ) and 195 to 343 (GNVI…VIGE). The GH10 domain maps to 352–675 (QNDIPDLYSV…KPAFWAVVDP (324 aa)). The active-site Proton donor is E495. D537 is an active-site residue. The active-site Nucleophile is E600. SLH domains are found at residues 1051-1114 (KKGV…YSGE) and 1115-1157 (FSDV…EMTQ).

This sequence belongs to the glycosyl hydrolase 10 (cellulase F) family.

The catalysed reaction is Endohydrolysis of (1-&gt;4)-beta-D-xylosidic linkages in xylans.. It functions in the pathway glycan degradation; xylan degradation. Its function is as follows. Endo-acting enzyme that randomly cleaves the internal xylosidic linkages of the xylan backbone, yielding xylooligosaccharides of various lengths which are further hydrolyzed to xylose molecules by beta-xylosidase (EC 3.2.1.37). Requires at least three xylose residues for catalytic activity. Does not have activity against xylobiose. This is Endo-1,4-beta-xylanase A (xynA) from Thermoanaerobacterium saccharolyticum.